Consider the following 173-residue polypeptide: Peptidyl-prolyl cis-trans isomerase 3 (173 aa).

The PPIase cyclophilin-type domain maps to 7–170 (FFDITIGGKA…KDCMIADCGQ (164 aa)).

Belongs to the cyclophilin-type PPIase family. In terms of tissue distribution, exclusively expressed in the single anterior excretory cell.

The enzyme catalyses [protein]-peptidylproline (omega=180) = [protein]-peptidylproline (omega=0). In terms of biological role, catalyzes the cis-trans isomerization of proline imidic peptide bonds in oligopeptides. Plays a role in protein folding, transport and assembly. The protein is Peptidyl-prolyl cis-trans isomerase 3 (cyn-3) of Caenorhabditis elegans.